The chain runs to 399 residues: 5'-C-glycyluridine monooxygenase-decarboxylase (399 aa).

Thr179 lines the phosphate pocket. The residue at position 230 (Lys230) is an N6-(pyridoxal phosphate)lysine. 4 residues coordinate phosphate: Arg318, Arg322, Arg353, and Arg367.

This sequence belongs to the SelA family. In terms of assembly, homooctamer; tetramer of homodimers. Pyridoxal 5'-phosphate is required as a cofactor.

It carries out the reaction (5'S,6'R)-C-glycyluridine + O2 = uridine-5'-carboxamide + CO2 + H2O. It functions in the pathway antibiotic biosynthesis. With respect to regulation, activity is dependent on phosphate. Monooxygenase-decarboxylase involved in the biosynthesis of the capuramycin-type nucleoside antibiotic A-503083. Catalyzes the oxidative decarboxylation of 5'-C-glycyluridine (GlyU) to uridine-5'-carboxamide (CarU). Is stereospecific for the (5'S,6'R)-diastereomer of GlyU. Directly incorporates a single oxygen atom from O(2) into the product CarU. This chain is 5'-C-glycyluridine monooxygenase-decarboxylase, found in Streptomyces sp.